Consider the following 296-residue polypeptide: 33 kDa chaperonin (296 aa).

Disulfide bonds link C237–C239 and C270–C273.

Belongs to the HSP33 family. Under oxidizing conditions two disulfide bonds are formed involving the reactive cysteines. Under reducing conditions zinc is bound to the reactive cysteines and the protein is inactive.

The protein resides in the cytoplasm. Its function is as follows. Redox regulated molecular chaperone. Protects both thermally unfolding and oxidatively damaged proteins from irreversible aggregation. Plays an important role in the bacterial defense system toward oxidative stress. In Acetivibrio thermocellus (strain ATCC 27405 / DSM 1237 / JCM 9322 / NBRC 103400 / NCIMB 10682 / NRRL B-4536 / VPI 7372) (Clostridium thermocellum), this protein is 33 kDa chaperonin.